A 165-amino-acid polypeptide reads, in one-letter code: Peptide deformylase (165 aa).

Fe cation contacts are provided by Cys-88 and His-130. The active site involves Glu-131. A Fe cation-binding site is contributed by His-134.

It belongs to the polypeptide deformylase family. It depends on Fe(2+) as a cofactor.

It carries out the reaction N-terminal N-formyl-L-methionyl-[peptide] + H2O = N-terminal L-methionyl-[peptide] + formate. Removes the formyl group from the N-terminal Met of newly synthesized proteins. Requires at least a dipeptide for an efficient rate of reaction. N-terminal L-methionine is a prerequisite for activity but the enzyme has broad specificity at other positions. This is Peptide deformylase from Borreliella burgdorferi (strain ATCC 35210 / DSM 4680 / CIP 102532 / B31) (Borrelia burgdorferi).